A 1615-amino-acid polypeptide reads, in one-letter code: Low-density lipoprotein receptor-related protein 5 (1615 aa).

The signal sequence occupies residues 1–31 (MEAAPPGPPWPLLLLLLLLLALCGCPAPAAA). Residues 32–288 (SPLLLFANRR…YSPMDIQVLS (257 aa)) form a beta-propeller 1 region. At 32-1384 (SPLLLFANRR…PPSDDSPAHS (1353 aa)) the chain is on the extracellular side. LDL-receptor class B repeat units lie at residues 75–119 (GAVY…DWVG), 120–162 (KKLY…DPAH), 163–206 (GYMY…DLEE), 207–247 (QKLY…TLSG), and 248–290 (DTLY…LSQE). The stretch at 78–81 (YWTD) is one YWTD 1 repeat. A glycan (N-linked (GlcNAc...) asparagine) is linked at asparagine 93. Residues 123–126 (YWTD) form a YWTD 2 repeat. An N-linked (GlcNAc...) asparagine glycan is attached at asparagine 138. A YWTD 3 repeat occupies 166–169 (YWTD). The YWTD 4 repeat unit spans residues 251-254 (YWTD). One can recognise an EGF-like 1 domain in the interval 295-337 (FHTRCEEDNGGCSHLCLLSPSEPFYTCACPTGVQLQDNGRTCK). 3 cysteine pairs are disulfide-bonded: cysteine 299–cysteine 310, cysteine 306–cysteine 321, and cysteine 323–cysteine 336. A beta-propeller 2 region spans residues 341-602 (EEVLLLARRT…AVNVAKVVGT (262 aa)). LDL-receptor class B repeat units follow at residues 385–427 (GYVY…DWVA), 428–470 (RNLY…HPVM), 471–514 (GLMY…DLQE), 515–557 (GKLY…LGDF), and 558–600 (IYWT…AKVV). YWTD repeat units follow at residues 388 to 391 (YWTD) and 431 to 434 (YWTD). An N-linked (GlcNAc...) asparagine glycan is attached at asparagine 446. Residues 474–477 (YWTD) form a YWTD 7 repeat. Residue asparagine 499 is glycosylated (N-linked (GlcNAc...) asparagine). Residues 559–562 (YWTD) form a YWTD 8 repeat. The EGF-like 2 domain maps to 601–641 (GTNPCADRNGGCSHLCFFTPHATRCGCPIGLELLSDMKTCI). Intrachain disulfides connect cysteine 605–cysteine 616, cysteine 612–cysteine 625, and cysteine 627–cysteine 640. The segment at 644 to 903 (EAFLVFTSRA…VFHSSRQDGL (260 aa)) is beta-propeller 3. 5 LDL-receptor class B repeats span residues 687 to 729 (NHIY…DWMG), 730 to 772 (KNLY…DPTK), 773 to 815 (GYIY…DYAD), 816 to 855 (QRLY…TQYS), and 856 to 898 (DYIY…FHSS). The YWTD 9 repeat unit spans residues 690 to 693 (YWTD). N-linked (GlcNAc...) asparagine glycosylation occurs at asparagine 705. YWTD repeat units follow at residues 819–822 (YWTD) and 859–862 (YWTD). The N-linked (GlcNAc...) asparagine glycan is linked to asparagine 878. In terms of domain architecture, EGF-like 3 spans 902 to 942 (GLNDCMHNNGQCGQLCLAIPGGHRCGCASHYTLDPSSRNCS). 3 disulfide bridges follow: cysteine 906-cysteine 917, cysteine 913-cysteine 926, and cysteine 928-cysteine 941. A beta-propeller 4 region spans residues 945-1212 (TTFLLFSQKS…AVEEVSLEEF (268 aa)). 5 LDL-receptor class B repeats span residues 989–1035 (KFIY…DIYS), 1036–1078 (RTLF…NAER), 1079–1123 (GYLY…DNTL), 1124–1164 (GKLF…TILG), and 1165–1207 (KHLY…VEEV). One can recognise an EGF-like 4 domain in the interval 1213-1254 (SAHPCARDNGGCSHICIAKGDGTPRCSCPVHLVLLQNLLTCG). Intrachain disulfides connect cysteine 1217-cysteine 1228, cysteine 1224-cysteine 1238, cysteine 1240-cysteine 1253, cysteine 1259-cysteine 1273, cysteine 1266-cysteine 1286, cysteine 1280-cysteine 1295, cysteine 1298-cysteine 1310, cysteine 1305-cysteine 1323, cysteine 1317-cysteine 1332, cysteine 1336-cysteine 1348, cysteine 1343-cysteine 1361, and cysteine 1355-cysteine 1370. LDL-receptor class A domains follow at residues 1258–1296 (TCSP…EGCP), 1297–1333 (VCSA…ADCD), and 1335–1371 (ICLP…LMCE). A helical transmembrane segment spans residues 1385–1407 (SAIGPVIGIILSLFVMGGVYFVC). Topologically, residues 1408–1615 (QRVVCQRYAG…PPPSPCTDSS (208 aa)) are cytoplasmic. A disordered region spans residues 1475–1501 (RNHVTGASSSSSSSTKATLYPPILNPP). A PPPSP motif A motif is present at residues 1500 to 1506 (PPPSPAT). The PPPSP motif B motif lies at 1538–1545 (PPTTPCST). Positions 1568–1615 (SDSDPYPPPPTPHSQYLSAEDSCPPSPATERSYFHLFPPPPSPCTDSS) are disordered. A PPPSP motif C motif is present at residues 1574 to 1581 (PPPPTPHS). Residues 1591-1596 (PPSPAT) carry the PPPSP motif D motif. Residues 1604–1615 (FPPPPSPCTDSS) are compositionally biased toward pro residues. The short motif at 1605–1612 (PPPPSPCT) is the PPPSP motif E element.

This sequence belongs to the LDLR family. In terms of assembly, homodimer; disulfide-linked. Forms phosphorylated oligomer aggregates on Wnt-signaling. Component of a Wnt-signaling complex that contains a WNT protein, a FZD protein and LRP5 or LRP6. Interacts with FZD8; the interaction is formed on WNT-binding and signaling. Interacts (via the phosphorylated PPPSP motif domains) with AXIN1; the interaction prevents inhibition of beta-catenin phosphorylation and signaling and is enhanced in the presence of GSK3B and WNT1 or WNT3A. Interacts (via beta-propeller regions 3 and 4) with DKK1; the interaction, enhanced by MESD and/or KREMEN, inhibits beta-catenin signaling by preventing GSK3-mediated phosphorylation of the PPPSP motifs and subsequent, AXIN1 binding. Interacts with MESD; the interaction prevents the formation of LRP5 aggregates, targets LRP5 to the plasma membrane and, when complexed with KREMEN2, increases DKK1 binding. Interacts with CSNK1E. Interacts with SOST; the interaction antagonizes canonical Wnt signaling. Interacts with APCDD1. Interacts with CAPRIN2. Post-translationally, phosphorylation of cytoplasmic PPPSP motifs regulates the signal transduction of the Wnt signaling pathway through acting as a docking site for AXIN1. In terms of tissue distribution, widely expressed, with the highest level of expression in the liver and in aorta.

It localises to the membrane. The protein localises to the endoplasmic reticulum. Functionally, acts as a coreceptor with members of the frizzled family of seven-transmembrane spanning receptors to transduce signal by Wnt proteins. Activates the canonical Wnt signaling pathway that controls cell fate determination and self-renewal during embryonic development and adult tissue regeneration. In particular, may play an important role in the development of the posterior patterning of the epiblast during gastrulation. During bone development, regulates osteoblast proliferation and differentiation thus determining bone mass. Mechanistically, the formation of the signaling complex between Wnt ligand, frizzled receptor and LRP5 coreceptor promotes the recruitment of AXIN1 to LRP5, stabilizing beta-catenin/CTNNB1 and activating TCF/LEF-mediated transcriptional programs. Acts as a coreceptor for non-Wnt proteins, such as norrin/NDP. Binding of norrin/NDP to frizzled 4/FZD4-LRP5 receptor complex triggers beta-catenin/CTNNB1-dependent signaling known to be required for retinal vascular development. Plays a role in controlling postnatal vascular regression in retina via macrophage-induced endothelial cell apoptosis. The chain is Low-density lipoprotein receptor-related protein 5 from Homo sapiens (Human).